Here is a 129-residue protein sequence, read N- to C-terminus: Small ribosomal subunit protein uS11 (129 aa).

Belongs to the universal ribosomal protein uS11 family. In terms of assembly, part of the 30S ribosomal subunit. Interacts with proteins S7 and S18. Binds to IF-3.

In terms of biological role, located on the platform of the 30S subunit, it bridges several disparate RNA helices of the 16S rRNA. Forms part of the Shine-Dalgarno cleft in the 70S ribosome. In Desulfitobacterium hafniense (strain DSM 10664 / DCB-2), this protein is Small ribosomal subunit protein uS11.